A 430-amino-acid chain; its full sequence is 3-phosphoshikimate 1-carboxyvinyltransferase (430 aa).

Lys-23, Ser-24, and Arg-28 together coordinate 3-phosphoshikimate. Lys-23 lines the phosphoenolpyruvate pocket. Residues Gly-95 and Arg-123 each contribute to the phosphoenolpyruvate site. Residues Ser-169, Gln-171, Asp-315, and Lys-342 each contribute to the 3-phosphoshikimate site. Gln-171 is a phosphoenolpyruvate binding site. Residue Asp-315 is the Proton acceptor of the active site. The phosphoenolpyruvate site is built by Arg-346 and Arg-388.

This sequence belongs to the EPSP synthase family. As to quaternary structure, monomer.

It is found in the cytoplasm. The enzyme catalyses 3-phosphoshikimate + phosphoenolpyruvate = 5-O-(1-carboxyvinyl)-3-phosphoshikimate + phosphate. It participates in metabolic intermediate biosynthesis; chorismate biosynthesis; chorismate from D-erythrose 4-phosphate and phosphoenolpyruvate: step 6/7. In terms of biological role, catalyzes the transfer of the enolpyruvyl moiety of phosphoenolpyruvate (PEP) to the 5-hydroxyl of shikimate-3-phosphate (S3P) to produce enolpyruvyl shikimate-3-phosphate and inorganic phosphate. This Streptococcus pyogenes serotype M6 (strain ATCC BAA-946 / MGAS10394) protein is 3-phosphoshikimate 1-carboxyvinyltransferase.